Here is a 228-residue protein sequence, read N- to C-terminus: Cytochrome b5 domain-containing protein 1 (228 aa).

The region spanning 17 to 83 (RRYFTPSEVA…DPQTRDIRKH (67 aa)) is the Cytochrome b5 heme-binding domain. Position 83 (His-83) interacts with heme.

Belongs to the cytochrome b5 family.

The protein resides in the cytoplasm. The protein localises to the cytoskeleton. It is found in the cilium axoneme. In terms of biological role, radial spoke stalk protein that binds heme under oxidizing conditions. Required for the coordinated beating of multiple cilia maybe by functioning in a redox signaling pathway. This is Cytochrome b5 domain-containing protein 1 (Cyb5d1) from Mus musculus (Mouse).